The following is a 504-amino-acid chain: Xylose import ATP-binding protein XylG (504 aa).

2 ABC transporter domains span residues 5-242 and 259-500; these read LEMK…VGRE and LRVE…VMEA. 37–44 contributes to the ATP binding site; it reads GENGSGKS.

It belongs to the ABC transporter superfamily. Xylose importer (TC 3.A.1.2.4) family. In terms of assembly, the complex is composed of two ATP-binding proteins (XylG), two transmembrane proteins (XylH) and a solute-binding protein (XylF).

The protein localises to the cell inner membrane. It carries out the reaction D-xylose(out) + ATP + H2O = D-xylose(in) + ADP + phosphate + H(+). Part of the ABC transporter complex XylFGH involved in xylose import. Responsible for energy coupling to the transport system. This Histophilus somni (strain 129Pt) (Haemophilus somnus) protein is Xylose import ATP-binding protein XylG.